Consider the following 491-residue polypeptide: Serine/threonine-protein kinase 3/4 (491 aa).

The tract at residues 1-24 (MEEVQRRQHPHPRRSLKKLSEDSL) is disordered. The segment covering 7–17 (RQHPHPRRSLK) has biased composition (basic residues). The 252-residue stretch at 32–283 (FDVLEKLGEG…ATQLLQHPFI (252 aa)) folds into the Protein kinase domain. ATP is bound by residues 38-46 (LGEGSYGSV) and lysine 61. Catalysis depends on aspartate 151, which acts as the Proton acceptor. Threonine 185 is modified (phosphothreonine; by autocatalysis). The stretch at 292–334 (LRDLITDMMEIKLKRQEEQQRDLDQDDEENSEEDDMDSGTMVR) forms a coiled coil. Disordered stretches follow at residues 307-394 (QEEQ…IQQS) and 406-435 (EKEN…PQDG). Residues 315 to 328 (DQDDEENSEEDDMD) are compositionally biased toward acidic residues. Composition is skewed to polar residues over residues 363–373 (TLDSQMGTMVI) and 410–428 (QANS…SSDN). The 48-residue stretch at 437–484 (FESLKSWSVEELQRRLASLDPTMEQEIEEIRQRYQAKRQPILDAIDAK) folds into the SARAH domain. Positions 442–475 (SWSVEELQRRLASLDPTMEQEIEEIRQRYQAKRQ) form a coiled coil.

It belongs to the protein kinase superfamily. STE Ser/Thr protein kinase family. STE20 subfamily. As to quaternary structure, homodimer; mediated via the coiled-coil region. It depends on Mg(2+) as a cofactor. In terms of processing, proteolytically cleaved by caspase-3 during apoptosis at Asp-328 resulting in a 37 kDa form. Proteolytic cleavage results in kinase activation and nuclear translocation of the truncated form (MST1/N).

It is found in the cytoplasm. It localises to the nucleus. The catalysed reaction is L-seryl-[protein] + ATP = O-phospho-L-seryl-[protein] + ADP + H(+). It catalyses the reaction L-threonyl-[protein] + ATP = O-phospho-L-threonyl-[protein] + ADP + H(+). Inhibited by the C-terminal non-catalytic region. Activated by caspase-cleavage. Full activation also requires homodimerization and autophosphorylation of Thr-185. In terms of biological role, stress-activated, pro-apoptotic kinase which, following caspase-cleavage, enters the nucleus and induces chromatin condensation followed by internucleosomal DNA fragmentation. Key component of the Hippo signaling pathway which plays a pivotal role in organ size control and tumor suppression by restricting proliferation and promoting apoptosis. The core of this pathway is composed of a kinase cascade wherein stk3/mst2 and stk4/mst1, in complex with its regulatory protein sav1, phosphorylates and activates lats1/2 in complex with its regulatory protein mob1, which in turn phosphorylates and inactivates yap1 oncoprotein and wwtr1/taz. Phosphorylation of yap1 by lats2 inhibits its translocation into the nucleus to regulate cellular genes important for cell proliferation, cell death, and cell migration. Phosphorylates 'Ser-14' of histone H2B (H2BS14ph) during apoptosis. This Squalus acanthias (Spiny dogfish) protein is Serine/threonine-protein kinase 3/4 (STK4).